A 63-amino-acid polypeptide reads, in one-letter code: Eumenitin VP1 (63 aa).

An N-terminal signal peptide occupies residues 1–22 (MRGTSFILFAVVVILGFLHANA). AXPX repeat units follow at residues 22–25 (AEPL), 26–29 (ANPA), 32–35 (ANPD), 40–43 (ADPL), and 44–47 (ADPE). Positions 23–48 (EPLANPAPLANPDPLANADPLADPEA) are excised as a propeptide.

In terms of tissue distribution, expressed by the venom gland.

Its subcellular location is the secreted. It is found in the target cell membrane. In terms of biological role, antimicrobial peptide with activities against the fungi B.cinerea (MIC=5 uM) and C.albicans (MIC=100 uM), the Gram-negative bacterium E.coli (MIC=25 uM) and the Gram-positive bacterium S.aureus (MIC=100 uM). Shows cytolytic activity against insect cell lines. Has no hemolytic activity against human erythrocytes. In vivo, peptide injection in the vicinity of the head and thorax of lepidopteran larvae induces feeding disorder followed by death due to starvation. The sequence is that of Eumenitin VP1 from Eumenes pomiformis (Potter wasp).